Reading from the N-terminus, the 385-residue chain is 1-deoxy-D-xylulose 5-phosphate reductoisomerase (385 aa).

Positions 10, 11, 12, 13, and 124 each coordinate NADPH. Lys125 provides a ligand contact to 1-deoxy-D-xylulose 5-phosphate. Glu126 contributes to the NADPH binding site. A Mn(2+)-binding site is contributed by Asp150. 1-deoxy-D-xylulose 5-phosphate-binding residues include Ser151, Glu152, Ser176, and His199. Glu152 provides a ligand contact to Mn(2+). Gly205 is an NADPH binding site. Residues Ser212, Asn217, Lys218, and Glu221 each contribute to the 1-deoxy-D-xylulose 5-phosphate site. Glu221 serves as a coordination point for Mn(2+).

It belongs to the DXR family. The cofactor is Mg(2+). It depends on Mn(2+) as a cofactor.

It carries out the reaction 2-C-methyl-D-erythritol 4-phosphate + NADP(+) = 1-deoxy-D-xylulose 5-phosphate + NADPH + H(+). It participates in isoprenoid biosynthesis; isopentenyl diphosphate biosynthesis via DXP pathway; isopentenyl diphosphate from 1-deoxy-D-xylulose 5-phosphate: step 1/6. In terms of biological role, catalyzes the NADPH-dependent rearrangement and reduction of 1-deoxy-D-xylulose-5-phosphate (DXP) to 2-C-methyl-D-erythritol 4-phosphate (MEP). This Clostridium botulinum (strain Alaska E43 / Type E3) protein is 1-deoxy-D-xylulose 5-phosphate reductoisomerase.